Reading from the N-terminus, the 196-residue chain is Elongation factor Ts (196 aa).

Residues 80 to 83 (TDFV) are involved in Mg(2+) ion dislocation from EF-Tu.

This sequence belongs to the EF-Ts family.

The protein resides in the cytoplasm. In terms of biological role, associates with the EF-Tu.GDP complex and induces the exchange of GDP to GTP. It remains bound to the aminoacyl-tRNA.EF-Tu.GTP complex up to the GTP hydrolysis stage on the ribosome. In Thermus thermophilus (strain ATCC BAA-163 / DSM 7039 / HB27), this protein is Elongation factor Ts.